Reading from the N-terminus, the 1203-residue chain is DNA-directed RNA polymerase subunit beta (1203 aa).

Residues 1174-1195 (AAQEAKAAFEAEEAEKATKAEA) show a composition bias toward basic and acidic residues. Residues 1174–1203 (AAQEAKAAFEAEEAEKATKAEATEEAAEQE) form a disordered region.

It belongs to the RNA polymerase beta chain family. As to quaternary structure, the RNAP catalytic core consists of 2 alpha, 1 beta, 1 beta' and 1 omega subunit. When a sigma factor is associated with the core the holoenzyme is formed, which can initiate transcription.

It catalyses the reaction RNA(n) + a ribonucleoside 5'-triphosphate = RNA(n+1) + diphosphate. In terms of biological role, DNA-dependent RNA polymerase catalyzes the transcription of DNA into RNA using the four ribonucleoside triphosphates as substrates. This Streptococcus pneumoniae (strain ATCC 700669 / Spain 23F-1) protein is DNA-directed RNA polymerase subunit beta.